The following is a 405-amino-acid chain: Dematin (405 aa).

Disordered stretches follow at residues 1-30, 79-158, 173-192, and 203-332; these read MERL…PSSI, PRSR…GSPQ, FPAA…TDYW, and TEWR…DRGN. Low complexity predominate over residues 11–29; the sequence is SPGSVSPSRDSSVPGSPSS. Phosphoserine is present on residues S16, S18, S26, S92, S96, S105, S110, S113, and S156. Residues 108-123 show a composition bias toward polar residues; the sequence is IISQASAPRTTGTPRT. Positions 216 to 227 are enriched in acidic residues; sequence EEEEEEEDDDSG. An interaction with RASGRF2 region spans residues 224–308; it reads DDSGEEMKAL…SRLQSTEFSP (85 aa). Phosphoserine is present on S226. Composition is skewed to basic and acidic residues over residues 228–242 and 252–261; these read EEMK…EELS and ILKEEMEKSL. Residues S269, S279, S289, S303, S315, S333, S372, and S383 each carry the phosphoserine modification. A compositionally biased stretch (polar residues) spans 276 to 322; it reads FHTSLHQGTSKSSSLPAYGRTTLSRLQSTEFSPSGSETGSPGLQNGE. One can recognise an HP domain in the interval 337 to 405; sequence VLEQKIYPYE…NELKKKASLF (69 aa). At S403 the chain carries Phosphoserine; by PKA.

Belongs to the villin/gelsolin family. Monomeric (isoform 2); under reducing conditions. Self-associates. Exists under oxidizing condition as a trimer of two isoforms 2 and isoform 1 linked by disulfide bonds. Found in a complex with DMTN, F-actin and spectrin. Found in a complex with ADD2, DMTN and SLC2A1. Interacts with F-actin, ITPKB, RASGRF2 and spectrin. Isoform 2 interacts with SLC2A1 (via C-terminus cytoplasmic region). Isoform 1 and isoform 2 interact (phosphorylated form) with plasmodium berghei 14-3-3 protein; the interaction occurs in a PKA-dependent manner. Post-translationally, phosphorylated. Phosphorylation at Ser-403 by PKA causes the C-terminal headpiece domain to associate with the N-terminal core domain, and leads to the inhibition of its actin bundling activity. The N-terminus is blocked. Expressed in platelets (at protein level). Expressed in heart, brain, lung, skeletal muscle, and kidney.

The protein localises to the cytoplasm. Its subcellular location is the cytosol. The protein resides in the perinuclear region. It is found in the cytoskeleton. It localises to the cell membrane. The protein localises to the membrane. Its subcellular location is the endomembrane system. The protein resides in the cell projection. Functionally, membrane-cytoskeleton-associated protein with F-actin-binding activity that induces F-actin bundles formation and stabilization. Its F-actin-bundling activity is reversibly regulated upon its phosphorylation by the cAMP-dependent protein kinase A (PKA). Binds to the erythrocyte membrane glucose transporter-1 SLC2A1/GLUT1, and hence stabilizes and attaches the spectrin-actin network to the erythrocytic plasma membrane. Plays a role in maintaining the functional integrity of PKA-activated erythrocyte shape and the membrane mechanical properties. Also plays a role as a modulator of actin dynamics in fibroblasts; acts as a negative regulator of the RhoA activation pathway. In platelets, functions as a regulator of internal calcium mobilization across the dense tubular system that affects platelet granule secretion pathways and aggregation. Also required for the formation of a diverse set of cell protrusions, such as filopodia and lamellipodia, necessary for platelet cell spreading, motility and migration. Acts as a tumor suppressor and inhibits malignant cell transformation. The sequence is that of Dematin (DMTN) from Homo sapiens (Human).